Consider the following 571-residue polypeptide: MKQSQMLIPTLKEIPSDAEVVSHQLMLRGGYIKQITAGMYAYLPLAYRVMKKIENIIREEMDRIDAVEMLVPAVVPAELWQESGRYETYGPTLFKLKDRHERDFILGPTHEETFTTIVRDAIKSYKKLPLYLYQIQMKYRDENRPRFGLLRGREFLMLDGYSFHVDDASMEKVFNDTDKAYQRIFERCGLDFRGIIADSGAMGGNRSKEFQAIAEVGEDTIAYSDSSDYAANIEMAKNLRIPKQSHETPKDLEKVATPNAKTIVEVAEFLGTDTQNEIKTLLFIADDEPVVVLMRGIDEVNEVKLKNHLGAIDLRPAEEEEAVKFLGANFGSLGPVGIDENLKVLADLDVEGMINASVGANEDGYHYINVNIDRDYHVDEFLDLREVREGELSPDGEGVLKFTRGIEIGHIFQLGTRYSESLGADVLDENGRQVPMRMGCYGIGVSRLLSAIVEQHNDENGIAWPREIAPFDIHVVPVNVKNDTQRELSEKVTAMLEDAGYQVLVDDRKERAGVKFADSDLIGLPIRITVGKKADEGIVEIKLRQNGEKIEVKLEELLNSVKILFNETITD.

It belongs to the class-II aminoacyl-tRNA synthetase family. ProS type 1 subfamily. Homodimer.

It is found in the cytoplasm. The enzyme catalyses tRNA(Pro) + L-proline + ATP = L-prolyl-tRNA(Pro) + AMP + diphosphate. Catalyzes the attachment of proline to tRNA(Pro) in a two-step reaction: proline is first activated by ATP to form Pro-AMP and then transferred to the acceptor end of tRNA(Pro). As ProRS can inadvertently accommodate and process non-cognate amino acids such as alanine and cysteine, to avoid such errors it has two additional distinct editing activities against alanine. One activity is designated as 'pretransfer' editing and involves the tRNA(Pro)-independent hydrolysis of activated Ala-AMP. The other activity is designated 'posttransfer' editing and involves deacylation of mischarged Ala-tRNA(Pro). The misacylated Cys-tRNA(Pro) is not edited by ProRS. This is Proline--tRNA ligase from Ligilactobacillus salivarius (strain UCC118) (Lactobacillus salivarius).